A 78-amino-acid polypeptide reads, in one-letter code: MTIVYCLTKLSNPSSSLRSSSDVSGNQGVEIDFDSNSISWKKWYSGGGGSGGKWDGGGSGGKWNGGGGSGGGSWKKWN.

Residues 51 to 78 are disordered; it reads GGKWDGGGSGGKWNGGGGSGGGSWKKWN.

This is an uncharacterized protein from Dictyostelium discoideum (Social amoeba).